Here is a 590-residue protein sequence, read N- to C-terminus: Interferon alpha/beta receptor 1 (590 aa).

The N-terminal stretch at 1–26 (MLAVVGAAALVLVAGAPWVLPSAAGG) is a signal peptide. Residues 27–429 (ENLKPPENID…EKTRPGSFST (403 aa)) are Extracellular-facing. Fibronectin type-III domains lie at 31–125 (PPEN…PFYT), 127–226 (HMSP…TTVA), 230–327 (PVPG…FIDS), and 332–425 (LPPP…TRPG). An N-linked (GlcNAc...) asparagine glycan is attached at Asn43. Cys78 and Cys86 are joined by a disulfide. N-linked (GlcNAc...) asparagine glycosylation is found at Asn109, Asn181, and Asn214. Cystine bridges form between Cys199/Cys220 and Cys284/Cys292. N-linked (GlcNAc...) asparagine glycosylation is found at Asn314, Asn370, Asn409, and Asn413. Cys397 and Cys419 are disulfide-bonded. A helical membrane pass occupies residues 430–449 (IWIITGLGVVFFSVMVLYAL). Over 450 to 590 (RSVWKYLCHV…ALRTEPALLC (141 aa)) the chain is Cytoplasmic. Residues 483 to 492 (VLLTAEEHTE) form an important for interaction with TYK2 region. The tract at residues 514 to 545 (DLRKYSSQTSQDSGNYSNEEEESVGTESGQAV) is disordered. Lys517 participates in a covalent cross-link: Glycyl lysine isopeptide (Lys-Gly) (interchain with G-Cter in ubiquitin). Polar residues predominate over residues 518–530 (YSSQTSQDSGNYS). Residue Ser526 is modified to Phosphoserine.

This sequence belongs to the type II cytokine receptor family. In terms of assembly, heterodimer with IFNAR2; forming the receptor for type I interferon. Interacts with TYK2. Interacts with STAT1 and STAT2. Interacts (serine-phosphorylated form) with FBXW11, the substrate recognition component of a SCF (SKP1-CUL1-F-box protein) E3 ubiquitin-protein ligase complex. 3Interacts with SHMT2; this promotes interaction with ABRAXAS2 and the BRISC complex. Interacts with TRIM10; this interaction prevents association between IFNAR1 and TYK2. Post-translationally, ubiquitinated. This leads to its internalization and lysosomal degradation. The 'Lys-63'-linked ubiquitin chains are cleaved off by the BRISC complex; this prevents receptor internalization and degradation. Probable ubiquitination sites have been identified in human, but are poorly conserved across species. In terms of processing, phosphorylated on serine residues in response to interferon binding; this promotes interaction with FBXW11 and ubiquitination.

The protein resides in the cell membrane. It is found in the late endosome. Its subcellular location is the lysosome. In terms of biological role, together with IFNAR2, forms the heterodimeric receptor for type I interferons (including interferons alpha, beta, epsilon, omega and kappa). Type I interferon binding activates the JAK-STAT signaling cascade, and triggers tyrosine phosphorylation of a number of proteins including JAKs, TYK2, STAT proteins and the IFNR alpha- and beta-subunits themselves. STAT proteins are then phosphorylated by the JAKs, promoting their translocation into the nucleus to regulate expression of interferon-regulated genes. Can also act independently of IFNAR2: form an active IFNB1 receptor by itself and activate a signaling cascade that does not involve activation of the JAK-STAT pathway. This Mus musculus (Mouse) protein is Interferon alpha/beta receptor 1 (Ifnar1).